The primary structure comprises 350 residues: Phosphoribosylformylglycinamidine cyclo-ligase (350 aa).

This sequence belongs to the AIR synthase family.

Its subcellular location is the cytoplasm. It catalyses the reaction 2-formamido-N(1)-(5-O-phospho-beta-D-ribosyl)acetamidine + ATP = 5-amino-1-(5-phospho-beta-D-ribosyl)imidazole + ADP + phosphate + H(+). It participates in purine metabolism; IMP biosynthesis via de novo pathway; 5-amino-1-(5-phospho-D-ribosyl)imidazole from N(2)-formyl-N(1)-(5-phospho-D-ribosyl)glycinamide: step 2/2. This chain is Phosphoribosylformylglycinamidine cyclo-ligase, found in Nitratidesulfovibrio vulgaris (strain DSM 19637 / Miyazaki F) (Desulfovibrio vulgaris).